Here is an 854-residue protein sequence, read N- to C-terminus: Glucans biosynthesis glucosyltransferase H (854 aa).

The next 7 helical transmembrane spans lie at 155–175 (ILLVLTLFQTAIATWYMKTIL), 209–229 (ILVLFAVLFCWVSAGFWTALM), 528–548 (VFLTGVMSYLSAPLWFMFLML), 583–603 (IALFSTTLVLLFLPKLLSVIL), 619–639 (FISLLLEMLFSVLLAPVRMLF), 671–691 (FVRHGSQLILGLVWAIGMAWL), and 695–715 (FLWWLAPIVFSLILSPFVSVY).

It belongs to the glycosyltransferase 2 family. OpgH subfamily.

It localises to the cell inner membrane. It participates in glycan metabolism; osmoregulated periplasmic glucan (OPG) biosynthesis. In terms of biological role, involved in the biosynthesis of osmoregulated periplasmic glucans (OPGs). This chain is Glucans biosynthesis glucosyltransferase H, found in Pectobacterium carotovorum subsp. carotovorum (strain PC1).